A 292-amino-acid polypeptide reads, in one-letter code: Ribosomal RNA small subunit methyltransferase A (292 aa).

Positions 29, 31, 56, 77, 102, and 127 each coordinate S-adenosyl-L-methionine.

This sequence belongs to the class I-like SAM-binding methyltransferase superfamily. rRNA adenine N(6)-methyltransferase family. RsmA subfamily.

It localises to the cytoplasm. The catalysed reaction is adenosine(1518)/adenosine(1519) in 16S rRNA + 4 S-adenosyl-L-methionine = N(6)-dimethyladenosine(1518)/N(6)-dimethyladenosine(1519) in 16S rRNA + 4 S-adenosyl-L-homocysteine + 4 H(+). Functionally, specifically dimethylates two adjacent adenosines (A1518 and A1519) in the loop of a conserved hairpin near the 3'-end of 16S rRNA in the 30S particle. May play a critical role in biogenesis of 30S subunits. This is Ribosomal RNA small subunit methyltransferase A from Bacillus pumilus (strain SAFR-032).